The following is an 82-amino-acid chain: NAD(P)H-quinone oxidoreductase subunit O, organellar chromatophore (82 aa).

This sequence belongs to the complex I NdhO subunit family. As to quaternary structure, NDH-1 can be composed of about 15 different subunits; different subcomplexes with different compositions have been identified which probably have different functions.

It localises to the plastid. Its subcellular location is the organellar chromatophore thylakoid membrane. The catalysed reaction is a plastoquinone + NADH + (n+1) H(+)(in) = a plastoquinol + NAD(+) + n H(+)(out). It carries out the reaction a plastoquinone + NADPH + (n+1) H(+)(in) = a plastoquinol + NADP(+) + n H(+)(out). Its function is as follows. NDH-1 shuttles electrons from an unknown electron donor, via FMN and iron-sulfur (Fe-S) centers, to quinones in the respiratory and/or the photosynthetic chain. The immediate electron acceptor for the enzyme in this species is believed to be plastoquinone. Couples the redox reaction to proton translocation, and thus conserves the redox energy in a proton gradient. Cyanobacterial NDH-1 also plays a role in inorganic carbon-concentration. In Paulinella chromatophora, this protein is NAD(P)H-quinone oxidoreductase subunit O, organellar chromatophore.